Reading from the N-terminus, the 198-residue chain is NAD(P)H dehydrogenase (quinone) (198 aa).

In terms of domain architecture, Flavodoxin-like spans 4–189; that stretch reads VLVLYYSMYG…SIARYQGEYV (186 aa). FMN contacts are provided by residues 10–15 and 78–80; these read SMYGHI and TRF. NAD(+) is bound at residue Tyr-12. Trp-98 contacts substrate. FMN is bound by residues 113–118 and His-133; that span reads STGTGG.

This sequence belongs to the WrbA family. The cofactor is FMN.

The catalysed reaction is a quinone + NADH + H(+) = a quinol + NAD(+). It carries out the reaction a quinone + NADPH + H(+) = a quinol + NADP(+). The protein is NAD(P)H dehydrogenase (quinone) of Escherichia fergusonii (strain ATCC 35469 / DSM 13698 / CCUG 18766 / IAM 14443 / JCM 21226 / LMG 7866 / NBRC 102419 / NCTC 12128 / CDC 0568-73).